Reading from the N-terminus, the 516-residue chain is Radial spoke head protein 3 homolog A (516 aa).

Disordered regions lie at residues 1-45, 120-139, and 190-233; these read MAAT…GNPA, STLN…AEAS, and PTGQ…PVEG. Over residues 12–25 the composition is skewed to basic residues; it reads AKKRPLHQRARRPA. Over residues 120–129 the composition is skewed to polar residues; it reads STLNQASAMT. Positions 208–217 are enriched in basic residues; sequence QARRRALARK. A compositionally biased stretch (basic and acidic residues) spans 218-233; sequence RAQEQLKPRTPEPVEG. Phosphothreonine; by MAPK1 is present on Thr270. A coiled-coil region spans residues 333–369; the sequence is YEEIRNVELAEVQRLEEQERRHREEKERRKKQQWEIV. Residues 459-516 are disordered; sequence EAMPPGQKTNVINGPNTVTDPSVTTLHTQKPVLDRVSSQPAPSQERKPVEEGGHLMAE. The segment covering 465 to 486 has biased composition (polar residues); sequence QKTNVINGPNTVTDPSVTTLHT. Basic and acidic residues predominate over residues 502–516; sequence QERKPVEEGGHLMAE.

The protein belongs to the flagellar radial spoke RSP3 family. May be a component of axonemal radial spokes. Interacts with IQUB. Interacts with phosphorylated MAPK1. Interacts with MEK1. Interacts with PKA regulatory subunits PRKAR1A and PRKAR1B. Interacts with RSPH1. Interacts with RSPH4A. Interacts with RSPH6A. Interacts with RSPH9. Interacts with CFAP61. Interacts with LRRC23.

Its subcellular location is the cytoplasm. The protein localises to the cytoskeleton. It localises to the cilium axoneme. The protein resides in the flagellum axoneme. Functionally, may function as part of axonemal radial spoke complexes that play an important part in the motility of sperm and cilia. Functions as a protein kinase A-anchoring protein that scaffolds the cAMP-dependent protein kinase holoenzyme. May serve as a point of convergence for MAPK and PKA signaling in cilia. The chain is Radial spoke head protein 3 homolog A (Rsph3a) from Mus musculus (Mouse).